The sequence spans 248 residues: MEMPIIKLKNFDGPFDLLLHLIKKNEMSITEIKIHEITKQYLEYIALMKELDLEITSEFIVMAATLIEIKSKSLLPKVKVEDETCEEDLQKILMEKLQEYKKFKKISAYLRERELSTGEVFTKKAEIIEVEADNKLDDDYFKNITMLDLYKLYNNLMRIYGEKQNVNVMEKKISVDKYKITDKINFLRDKLSEKSVVRFSEFIPQCECKLEVVVTFMAMLELIKRSEIKVIQYENFGEIMMEKVIVNE.

The protein belongs to the ScpA family. As to quaternary structure, component of a cohesin-like complex composed of ScpA, ScpB and the Smc homodimer, in which ScpA and ScpB bind to the head domain of Smc. The presence of the three proteins is required for the association of the complex with DNA.

It localises to the cytoplasm. Participates in chromosomal partition during cell division. May act via the formation of a condensin-like complex containing Smc and ScpB that pull DNA away from mid-cell into both cell halves. This Clostridium perfringens (strain SM101 / Type A) protein is Segregation and condensation protein A.